A 247-amino-acid chain; its full sequence is Probable transcriptional regulatory protein GM21_0933 (247 aa).

This sequence belongs to the TACO1 family.

It localises to the cytoplasm. This Geobacter sp. (strain M21) protein is Probable transcriptional regulatory protein GM21_0933.